The following is a 158-amino-acid chain: ATP synthase subunit delta, mitochondrial (158 aa).

Residues 1–22 (MFRLTSARALFRVANVAARRTY) constitute a mitochondrion transit peptide.

The protein belongs to the ATPase epsilon chain family. F-type ATPases have 2 components, CF(1) - the catalytic core - and CF(0) - the membrane proton channel. CF(1) has five subunits: alpha(3), beta(3), gamma(1), delta(1), epsilon(1). CF(0) has three main subunits: a, b and c.

It is found in the mitochondrion. Its subcellular location is the mitochondrion inner membrane. Functionally, mitochondrial membrane ATP synthase (F(1)F(0) ATP synthase or Complex V) produces ATP from ADP in the presence of a proton gradient across the membrane which is generated by electron transport complexes of the respiratory chain. F-type ATPases consist of two structural domains, F(1) - containing the extramembraneous catalytic core, and F(0) - containing the membrane proton channel, linked together by a central stalk and a peripheral stalk. During catalysis, ATP turnover in the catalytic domain of F(1) is coupled via a rotary mechanism of the central stalk subunits to proton translocation. Part of the complex F(1) domain and of the central stalk which is part of the complex rotary element. Rotation of the central stalk against the surrounding alpha(3)beta(3) subunits leads to hydrolysis of ATP in three separate catalytic sites on the beta subunits. The chain is ATP synthase subunit delta, mitochondrial (ATP16) from Eremothecium gossypii (strain ATCC 10895 / CBS 109.51 / FGSC 9923 / NRRL Y-1056) (Yeast).